Consider the following 380-residue polypeptide: Two-component response regulator ORR28 (380 aa).

Residues 13–130 (SAMVIDEDKC…TIQNLWQHLD (118 aa)) form the Response regulatory domain. Residue Asp65 is modified to 4-aspartylphosphate. Positions 169–223 (RKYYLMWTPHLQKKFLHALEILGEGQISLMIMDVDNIDRKQISTHLQKHRLQLKK) form a DNA-binding region, myb-like GARP. The tract at residues 225–245 (LSKASFTKGSNEDTSNPSAKN) is disordered. Residues 228 to 245 (ASFTKGSNEDTSNPSAKN) are compositionally biased toward polar residues.

The protein belongs to the ARR family. Type-B subfamily. In terms of processing, two-component system major event consists of a His-to-Asp phosphorelay between a sensor histidine kinase (HK) and a response regulator (RR). In plants, the His-to-Asp phosphorelay involves an additional intermediate named Histidine-containing phosphotransfer protein (HPt). This multistep phosphorelay consists of a His-Asp-His-Asp sequential transfer of a phosphate group between first a His and an Asp of the HK protein, followed by the transfer to a conserved His of the HPt protein and finally the transfer to an Asp in the receiver domain of the RR protein.

It is found in the nucleus. Transcriptional activator that binds specific DNA sequence. Functions as a response regulator involved in His-to-Asp phosphorelay signal transduction system. Phosphorylation of the Asp residue in the receiver domain activates the ability of the protein to promote the transcription of target genes. May directly activate some type-A response regulators in response to cytokinins. This Oryza sativa subsp. indica (Rice) protein is Two-component response regulator ORR28.